The primary structure comprises 206 residues: Small ribosomal subunit protein uS4 (206 aa).

A disordered region spans residues 18-44 (NIWGRPKSPVNRREYGPGQHGQRRKGK). The S4 RNA-binding domain maps to 94 to 157 (RRLDAVVYRA…KQLAVVLEAV (64 aa)).

This sequence belongs to the universal ribosomal protein uS4 family. In terms of assembly, part of the 30S ribosomal subunit. Contacts protein S5. The interaction surface between S4 and S5 is involved in control of translational fidelity.

One of the primary rRNA binding proteins, it binds directly to 16S rRNA where it nucleates assembly of the body of the 30S subunit. Its function is as follows. With S5 and S12 plays an important role in translational accuracy. The protein is Small ribosomal subunit protein uS4 of Jannaschia sp. (strain CCS1).